The following is a 269-amino-acid chain: MERYQQLFDRLAARKEGAFVPFVTLGDPSPEQSLQIIDALVEGGADALELGIPFSDPLADGPTIQSATLRAFASGTTPDQCFEMLAAVRQKYPDLPIGLLMYANLVFSRGVDEFYARCAAVGVDSVLVADVPVEESAPFRQAAMRHNVAPIFICPPNADDDLLRQIASYGRGYTYLLSRAGVTGAENRAALPLNHLINKLTEYHAAPPLQGFGISEPAQVKAAIEAGAAGAISGSAIVKIIENNLNDRAAMLESLKTFVRQLKAASLPA.

Residues Glu49 and Asp60 each act as proton acceptor in the active site.

It belongs to the TrpA family. Tetramer of two alpha and two beta chains.

It carries out the reaction (1S,2R)-1-C-(indol-3-yl)glycerol 3-phosphate + L-serine = D-glyceraldehyde 3-phosphate + L-tryptophan + H2O. The protein operates within amino-acid biosynthesis; L-tryptophan biosynthesis; L-tryptophan from chorismate: step 5/5. The alpha subunit is responsible for the aldol cleavage of indoleglycerol phosphate to indole and glyceraldehyde 3-phosphate. In Cronobacter sakazakii (strain ATCC BAA-894) (Enterobacter sakazakii), this protein is Tryptophan synthase alpha chain.